The following is a 297-amino-acid chain: ATP synthase subunit a (297 aa).

Helical transmembrane passes span 38-58 (PLIP…IAIL), 77-97 (GYVL…VDLL), 107-127 (LFII…VGGI), 133-153 (SSTV…IMGV), 174-194 (TIPL…LLSI), 202-222 (VLAG…FFTL), 230-250 (VGLV…HVYF), and 252-272 (ILVS…YWSQ).

It belongs to the ATPase A chain family. F-type ATPases have 2 components, CF(1) - the catalytic core - and CF(0) - the membrane proton channel. CF(1) has five subunits: alpha(3), beta(3), gamma(1), delta(1), epsilon(1). CF(0) has three main subunits: a(1), b(2) and c(9-12). The alpha and beta chains form an alternating ring which encloses part of the gamma chain. CF(1) is attached to CF(0) by a central stalk formed by the gamma and epsilon chains, while a peripheral stalk is formed by the delta and b chains.

It is found in the cell membrane. Functionally, key component of the proton channel; it plays a direct role in the translocation of protons across the membrane. The polypeptide is ATP synthase subunit a (Mycoplasmoides gallisepticum (strain R(low / passage 15 / clone 2)) (Mycoplasma gallisepticum)).